Consider the following 338-residue polypeptide: Lipoate-protein ligase A (338 aa).

A BPL/LPL catalytic domain is found at 29 to 216; the sequence is SPDQRVLFLW…AFFAYYDEQV (188 aa). Residues R71, 76-79, and K134 each bind ATP; that span reads GAVF. K134 provides a ligand contact to (R)-lipoate.

The protein belongs to the LplA family. In terms of assembly, monomer.

Its subcellular location is the cytoplasm. It carries out the reaction L-lysyl-[lipoyl-carrier protein] + (R)-lipoate + ATP = N(6)-[(R)-lipoyl]-L-lysyl-[lipoyl-carrier protein] + AMP + diphosphate + H(+). Its pathway is protein modification; protein lipoylation via exogenous pathway; protein N(6)-(lipoyl)lysine from lipoate: step 1/2. It functions in the pathway protein modification; protein lipoylation via exogenous pathway; protein N(6)-(lipoyl)lysine from lipoate: step 2/2. Functionally, catalyzes both the ATP-dependent activation of exogenously supplied lipoate to lipoyl-AMP and the transfer of the activated lipoyl onto the lipoyl domains of lipoate-dependent enzymes. This chain is Lipoate-protein ligase A, found in Yersinia pseudotuberculosis serotype IB (strain PB1/+).